We begin with the raw amino-acid sequence, 61 residues long: Large ribosomal subunit protein uL30 (61 aa).

This sequence belongs to the universal ribosomal protein uL30 family. Part of the 50S ribosomal subunit.

The protein is Large ribosomal subunit protein uL30 of Neisseria gonorrhoeae (strain ATCC 700825 / FA 1090).